A 37-amino-acid chain; its full sequence is Large ribosomal subunit protein bL36 (37 aa).

The protein belongs to the bacterial ribosomal protein bL36 family.

This chain is Large ribosomal subunit protein bL36, found in Heliobacterium modesticaldum (strain ATCC 51547 / Ice1).